The chain runs to 464 residues: Serine/threonine-protein kinase 38-like (464 aa).

Alanine 2 is modified (N-acetylalanine). The tract at residues 64-89 (KLRRSQHARKETEFLRLKRTRLGLDD) is S100B binding. Threonine 75 bears the Phosphothreonine mark. The Protein kinase domain maps to 90–383 (FESLKVIGRG…VEEIKGHPFF (294 aa)). ATP-binding positions include 96–104 (IGRGAFGEV) and lysine 119. Aspartate 213 acts as the Proton acceptor in catalysis. The residue at position 282 (serine 282) is a Phosphoserine; by autocatalysis. The AGC-kinase C-terminal domain maps to 384–453 (EGVDWGHIRE…KRFEGLTQRG (70 aa)). Threonine 442 carries the post-translational modification Phosphothreonine; by STK24/MST3.

The protein belongs to the protein kinase superfamily. AGC Ser/Thr protein kinase family. Homodimeric S100B binds two molecules of STK38L. Interacts with MOB1 and MOB2. Interacts with MICAL1; leading to inhibit the protein kinase activity by antagonizing activation by MST1/STK4. Mg(2+) is required as a cofactor. Highly expressed in the large and small intestine, stomach and testis. High levels also present in the brain, in particular the neurocortex, basal forebrain, hippocampus, the amygdala, cerebellum and brainstem.

It is found in the cytoplasm. It localises to the cytoskeleton. The protein localises to the membrane. The catalysed reaction is L-seryl-[protein] + ATP = O-phospho-L-seryl-[protein] + ADP + H(+). It catalyses the reaction L-threonyl-[protein] + ATP = O-phospho-L-threonyl-[protein] + ADP + H(+). With respect to regulation, activated by binding of S100B which releases autoinhibitory N-lobe interactions, enabling ATP to bind and the autophosphorylation of Ser-282. Thr-442 then undergoes calcium-dependent phosphorylation by STK24/MST3. Interactions between phosphorylated Thr-442 and the N-lobe promote additional structural changes that complete the activation of the kinase. Autoinhibition is also released by the binding of MOB1/MOBKL1A and MOB2 to the N-terminal of STK38L. Functionally, involved in the regulation of structural processes in differentiating and mature neuronal cells. The protein is Serine/threonine-protein kinase 38-like of Mus musculus (Mouse).